The chain runs to 174 residues: Centrosomal protein 20 (174 aa).

The segment at 1 to 104 is necessary and sufficient for homooligomerization and localization to centrosomes and pericentriolar satellites; it reads MATVTELKAV…AFEESKDNSI (104 aa). A LisH domain is found at 49–81; it reads ENLLINELIREYLEFNKYKYTASVLIAESGQPV. Residues 136–174 are disordered; sequence TKHLSWKPSRRPDDDHVRKDTGPRTTTEELPAAAQAVSR. The residue at position 144 (S144) is a Phosphoserine. Over residues 145 to 157 the composition is skewed to basic and acidic residues; it reads RRPDDDHVRKDTG.

Belongs to the CEP43 family. In terms of assembly, homooligomer; probably required for localization to centrosomes. Forms a complex with KIAA0753/OFIP and OFD1; within this complex may stabilize the interaction between OFD1 and KIAA0753/OFIP. Interacts with PCM1; this interaction may be mediated by KIAA0753/OFIP.

It localises to the cytoplasm. Its subcellular location is the cytoskeleton. It is found in the microtubule organizing center. The protein resides in the centrosome. The protein localises to the centriole. It localises to the cell projection. Its subcellular location is the cilium. It is found in the cilium basal body. The protein resides in the cytoplasmic granule. The protein localises to the centriolar satellite. Its function is as follows. Involved in the biogenesis of cilia. Required for the recruitment of PLK1 to centrosomes and S phase progression. In Mus musculus (Mouse), this protein is Centrosomal protein 20.